The sequence spans 419 residues: MFTRDMNIATFDPELFEAMSNEVVRQEEHIELIASENYCSPRVLEAQGSQLTNKYAEGYPGKRYYGGCEYVDIAEQLAIDRAKELFGATYANVQPHAGSQANAAVFQALVTPGGKVLGMSLAHGGHLTHGSHVSFSGKSYEAFQYGLHPETGDIDYEELERLAVEHKPEMIIGGFSAFSGVVDWARMRTIADKVGAYFFVDMAHVAGLIAAGLYPNPVPHAHVVTTTTHKTLAGPRGGLIISGCDDEAIYKKLNSAVFPGGQGGPLMHIIAAKAVAFKEALSPEFKVYQQNVLANALAMVDVLQDRGYKVVSNGTQNHLLLLDLIDKDITGKDADAALGKAHITVNKNSVPNDPRSPFVTSGLRLGTPAITRRGFGIEETKALTGWICDILDDIENEDVSKRVQDQVKELCARFPVYQK.

(6S)-5,6,7,8-tetrahydrofolate contacts are provided by residues Leu-121 and 125 to 127 (GHL). Position 230 is an N6-(pyridoxal phosphate)lysine (Lys-230). (6S)-5,6,7,8-tetrahydrofolate is bound at residue 356–358 (SPF).

This sequence belongs to the SHMT family. Homodimer. Pyridoxal 5'-phosphate serves as cofactor.

The protein localises to the cytoplasm. It catalyses the reaction (6R)-5,10-methylene-5,6,7,8-tetrahydrofolate + glycine + H2O = (6S)-5,6,7,8-tetrahydrofolate + L-serine. The protein operates within one-carbon metabolism; tetrahydrofolate interconversion. Its pathway is amino-acid biosynthesis; glycine biosynthesis; glycine from L-serine: step 1/1. Its function is as follows. Catalyzes the reversible interconversion of serine and glycine with tetrahydrofolate (THF) serving as the one-carbon carrier. This reaction serves as the major source of one-carbon groups required for the biosynthesis of purines, thymidylate, methionine, and other important biomolecules. Also exhibits THF-independent aldolase activity toward beta-hydroxyamino acids, producing glycine and aldehydes, via a retro-aldol mechanism. The chain is Serine hydroxymethyltransferase 1 from Colwellia psychrerythraea (strain 34H / ATCC BAA-681) (Vibrio psychroerythus).